Here is a 760-residue protein sequence, read N- to C-terminus: Transferrin receptor protein 1 (760 aa).

At 1–67 (MMDQARSAFS…KPKRCSGSIC (67 aa)) the chain is on the cytoplasmic side. The segment at 1 to 67 (MMDQARSAFS…KPKRCSGSIC (67 aa)) is mediates interaction with SH3BP4. Phosphoserine occurs at positions 10 and 19. Phosphotyrosine is present on Y20. The Endocytosis signal signature appears at 20–23 (YTRF). T21 is subject to Phosphothreonine. A Phosphoserine modification is found at S24. The Stop-transfer sequence motif lies at 58-61 (KPKR). Residues C62 and C67 are each lipidated (S-palmitoyl cysteine). A helical; Signal-anchor for type II membrane protein membrane pass occupies residues 68-88 (YGTIAVIVFFLIGFMIGYLGY). The Extracellular portion of the chain corresponds to 89–760 (CKGVEPKTEC…GDVWDIDNEF (672 aa)). O-linked (GalNAc...) threonine glycosylation is present at T104. One can recognise a PA domain in the interval 223–313 (SKAATVTGKL…GTGDPYTPGF (91 aa)). N251 and N317 each carry an N-linked (GlcNAc...) asparagine glycan. Positions 569 to 760 (TMDTYKELIE…GDVWDIDNEF (192 aa)) are ligand-binding. A Cell attachment site; required for binding to transferrin motif is present at residues 646-648 (RGD). The N-linked (GlcNAc...) asparagine glycan is linked to N727.

Belongs to the peptidase M28 family. M28B subfamily. In terms of assembly, homodimer; disulfide-linked. Binds one transferrin or HFE molecule per subunit. Binds the HLA class II histocompatibility antigen, DR1. Interacts with SH3BP3. Interacts with STEAP3; facilitates TFRC endocytosis in erythroid precursor cells. Interacts with GRM2. (Microbial infection) Interacts with Guanarito, Junin and Machupo arenavirus glycoprotein complex. As to quaternary structure, (Microbial infection) Interacts with rabies virus protein G. In terms of assembly, (Microbial infection) Interacts with SARS-CoV-2 spike protein S. Stearoylated by ZDHHC6 which inhibits TFRC-mediated activation of the JNK pathway and promotes mitochondrial fragmentation. Stearoylation does not affect iron uptake. Post-translationally, N- and O-glycosylated, phosphorylated and palmitoylated. The serum form is only glycosylated. In terms of processing, proteolytically cleaved on Arg-100 to produce the soluble serum form (sTfR). Palmitoylated on both Cys-62 and Cys-67. Cys-62 seems to be the major site of palmitoylation.

Its subcellular location is the cell membrane. The protein localises to the melanosome. It localises to the secreted. Functionally, cellular uptake of iron occurs via receptor-mediated endocytosis of ligand-occupied transferrin receptor into specialized endosomes. Endosomal acidification leads to iron release. The apotransferrin-receptor complex is then recycled to the cell surface with a return to neutral pH and the concomitant loss of affinity of apotransferrin for its receptor. Transferrin receptor is necessary for development of erythrocytes and the nervous system. A second ligand, the hereditary hemochromatosis protein HFE, competes for binding with transferrin for an overlapping C-terminal binding site. Positively regulates T and B cell proliferation through iron uptake. Acts as a lipid sensor that regulates mitochondrial fusion by regulating activation of the JNK pathway. When dietary levels of stearate (C18:0) are low, promotes activation of the JNK pathway, resulting in HUWE1-mediated ubiquitination and subsequent degradation of the mitofusin MFN2 and inhibition of mitochondrial fusion. When dietary levels of stearate (C18:0) are high, TFRC stearoylation inhibits activation of the JNK pathway and thus degradation of the mitofusin MFN2. Mediates uptake of NICOL1 into fibroblasts where it may regulate extracellular matrix production. Its function is as follows. (Microbial infection) Acts as a receptor for new-world arenaviruses: Guanarito, Junin and Machupo virus. (Microbial infection) Acts as a host entry factor for rabies virus that hijacks the endocytosis of TFRC to enter cells. In terms of biological role, (Microbial infection) Acts as a host entry factor for SARS-CoV, MERS-CoV and SARS-CoV-2 viruses that hijack the endocytosis of TFRC to enter cells. This chain is Transferrin receptor protein 1 (TFRC), found in Homo sapiens (Human).